The chain runs to 347 residues: MKDKELSQRKNDHLDIVLHPERAKQTIRTGFEQWRFEHCALPELALDDIDLSTRLFGRVMKAPLLISSMTGGARRASDINRHLAEAAQTLGLAMGVGSQRVALESEDNWGLTGELRRYAPDIPLLANLGAAQIGSLQGLDYARRAVEMVEADALIIHLNPLQEALQTGGDRDWRGVLAAIKRVVNALSVPVVVKEVGAGLSVPVARQLAEAGVTMLDVAGAGGTSWAAVEGERAASDHARSVAMAFADWGIPTAQALRQIHQAFPSMPLIASGGIRDGIDTAKALAMGASLVGQAAAVLGSATTSTSAVLDHFAVVIEQLRVACFCTGSASLSALREARLARVGDEE.

9–10 is a substrate binding site; the sequence is RK. FMN is bound by residues S67, 68-70, S98, and N127; that span reads SMT. 98–100 lines the substrate pocket; it reads SQR. Q162 provides a ligand contact to substrate. E163 lines the Mg(2+) pocket. Residues K194, T224, 274–276, and 295–296 contribute to the FMN site; these read GIR and AA.

This sequence belongs to the IPP isomerase type 2 family. As to quaternary structure, homooctamer. Dimer of tetramers. FMN is required as a cofactor. Requires NADPH as cofactor. Mg(2+) serves as cofactor.

The protein localises to the cytoplasm. The catalysed reaction is isopentenyl diphosphate = dimethylallyl diphosphate. Functionally, involved in the biosynthesis of isoprenoids. Catalyzes the 1,3-allylic rearrangement of the homoallylic substrate isopentenyl (IPP) to its allylic isomer, dimethylallyl diphosphate (DMAPP). This chain is Isopentenyl-diphosphate delta-isomerase, found in Cronobacter sakazakii (strain ATCC BAA-894) (Enterobacter sakazakii).